The primary structure comprises 814 residues: Leucine-rich repeat-containing protein 41 (814 aa).

The interval 45–54 (ALFELCGRAV) is interaction with Elongin BC complex. S155, S276, and S326 each carry phosphoserine. Positions 265–408 (LCGEASRGRA…KKGARTRQGC (144 aa)) are disordered. T327 is subject to Phosphothreonine. Low complexity predominate over residues 354-385 (TKRPPSAPATTSSASASSSTSSSKRAPASSAP). Position 375 is a phosphoserine (S375). Positions 389 to 403 (PLKRFKRAAGKKGAR) are enriched in basic residues. LRR repeat units lie at residues 489–509 (WVSLESLTLSYNGLGSNIFRL), 520–532 (AGCRLRALHLSDL), 533–557 (FSPLPILELTRAIVRALPLLRVLSI), 615–637 (SGSLQQLSLDSATFASPQDFGLV), 638–661 (LQTLKEYNLTLKRLSFHDMNLADC), 703–730 (NSTLKGLRLPGNRLGNAGLLALADVFSE), and 733–754 (SSSLCQLDISSNCIKPDGLLEF).

As to quaternary structure, part of a E3 ubiquitin ligase complex with elongin BC complex (ELOB and ELOC), RBX1 and CUL5.

The polypeptide is Leucine-rich repeat-containing protein 41 (LRRC41) (Bos taurus (Bovine)).